Here is a 235-residue protein sequence, read N- to C-terminus: Aspartate/glutamate leucyltransferase (235 aa).

The protein belongs to the R-transferase family. Bpt subfamily.

The protein localises to the cytoplasm. The catalysed reaction is N-terminal L-glutamyl-[protein] + L-leucyl-tRNA(Leu) = N-terminal L-leucyl-L-glutamyl-[protein] + tRNA(Leu) + H(+). The enzyme catalyses N-terminal L-aspartyl-[protein] + L-leucyl-tRNA(Leu) = N-terminal L-leucyl-L-aspartyl-[protein] + tRNA(Leu) + H(+). Its function is as follows. Functions in the N-end rule pathway of protein degradation where it conjugates Leu from its aminoacyl-tRNA to the N-termini of proteins containing an N-terminal aspartate or glutamate. This Pseudomonas syringae pv. tomato (strain ATCC BAA-871 / DC3000) protein is Aspartate/glutamate leucyltransferase.